Consider the following 43-residue polypeptide: Protein PsbN (43 aa).

The helical transmembrane segment at 5-27 (TLVAIFISGSLVSFTGYALYTAF) threads the bilayer.

It belongs to the PsbN family.

It is found in the plastid. The protein localises to the chloroplast thylakoid membrane. In terms of biological role, may play a role in photosystem I and II biogenesis. This is Protein PsbN from Nelumbo lutea (American lotus).